The sequence spans 445 residues: Ribosomal protein uS12 methylthiotransferase RimO (445 aa).

In terms of domain architecture, MTTase N-terminal spans 4 to 119; that stretch reads IKVALVSLGC…LLESIKVFLK (116 aa). The [4Fe-4S] cluster site is built by C13, C48, C82, C156, C160, and C163. The Radical SAM core domain occupies 142–372; that stretch reads TTPTYTAYVR…MILQQSISKD (231 aa). One can recognise a TRAM domain in the interval 375-441; the sequence is KEKIGKIYEV…EYDLIGVVYN (67 aa).

Belongs to the methylthiotransferase family. RimO subfamily. [4Fe-4S] cluster is required as a cofactor.

The protein resides in the cytoplasm. It carries out the reaction L-aspartate(89)-[ribosomal protein uS12]-hydrogen + (sulfur carrier)-SH + AH2 + 2 S-adenosyl-L-methionine = 3-methylsulfanyl-L-aspartate(89)-[ribosomal protein uS12]-hydrogen + (sulfur carrier)-H + 5'-deoxyadenosine + L-methionine + A + S-adenosyl-L-homocysteine + 2 H(+). In terms of biological role, catalyzes the methylthiolation of an aspartic acid residue of ribosomal protein uS12. This Clostridium botulinum (strain Loch Maree / Type A3) protein is Ribosomal protein uS12 methylthiotransferase RimO.